A 564-amino-acid polypeptide reads, in one-letter code: MTLKIRTIIILFCVISVTTTSQSLNATLKTFDPRLLNSTADRDIAMKNVPLVRLTRHLLSPERYDVRVRPILDHKKSLKVHISISLYQIIEVDEPSQNIKLNVWMIQKWRDEYLDWNPNEYGMINSTIIPFHHLWIPDTYLYNSVKMSRDETERYMNIQATSNYWKGEKGAELSFLYPAIYTITCRLNIRFFPYDRQNCTLTISSWTNSKSALDYYADTEVSMQSFIPNEEWQVKSFKIHRHEYKYACCAEPWVILQASLVIQRKPLYYLVNLIIPTSIITLVAITGFFTPASTDDDRTEKINLGITTLLAMSILMLMVSDQMPTTSEFVPLIAWFYLSIIIIISIGTFLTSVVLSVQGRRQYGRNPPQFIRYIFFVLLPQVLLLNVPPPLQTLWGELDDDPLNVRRRKKSHYLSRNVNNGSTKMASPMSTLRVPQSAGSVSEKRQSFQMIDVTSPNSPNTARSRAPSLAPSTAKATMWEGTMSALAGTNTQLRRTSNVFNKEVDEMRRKRQCSLEWEFLATVLDRFLLIVFVGAVVIVTAGLILVGRMAQYSYDHPDDRFFNV.

Positions 1–20 (MTLKIRTIIILFCVISVTTT) are cleaved as a signal peptide. At 21 to 268 (SQSLNATLKT…SLVIQRKPLY (248 aa)) the chain is on the extracellular side. Asn25, Asn37, Asn125, and Asn198 each carry an N-linked (GlcNAc...) asparagine glycan. 2 cysteine pairs are disulfide-bonded: Cys185/Cys199 and Cys248/Cys249. The next 3 helical transmembrane spans lie at 269–289 (YLVNLIIPTSIITLVAITGFF), 302–319 (INLGITTLLAMSILMLMV), and 329–353 (FVPLIAWFYLSIIIIISIGTFLTSV). At 354 to 526 (VLSVQGRRQY…WEFLATVLDR (173 aa)) the chain is on the cytoplasmic side. The chain crosses the membrane as a helical span at residues 527–547 (FLLIVFVGAVVIVTAGLILVG).

The protein belongs to the ligand-gated ion channel (TC 1.A.9) family. Acetylcholine receptor (TC 1.A.9.1) subfamily. As to quaternary structure, the functional receptor is a heteromer of deg-3 and des-2. Interacts with ric-3; which is required for proper receptor folding.

It is found in the postsynaptic cell membrane. It localises to the cell membrane. Its function is as follows. Subunit of the non-synaptic neuronal acetylcholine receptor, which may play a role in chemotaxis towards choline. After binding choline or acetylcholine, the AChR responds by an extensive change in conformation that affects all subunits and leads to opening of an ion-conducting channel across the plasma membrane. The sequence is that of Acetylcholine receptor subunit alpha-type deg-3 (deg-3) from Caenorhabditis elegans.